The sequence spans 255 residues: Spectinomycin 9-adenylyltransferase (255 aa).

It carries out the reaction spectinomycin + ATP = 9-O-adenylylspectinomycin + diphosphate. Functionally, mediates bacterial resistance to the antibiotic spectinomycin but not streptomycin. The chain is Spectinomycin 9-adenylyltransferase from Enterococcus faecalis (Streptococcus faecalis).